The chain runs to 146 residues: Large ribosomal subunit protein uL15 (146 aa).

Positions 1–13 (MKLNELKPNEGSR) are enriched in basic and acidic residues. The tract at residues 1-54 (MKLNELKPNEGSRRNRKRVGRGTSSGYGKTAGRGQKGQLARTGGKTRLGFEGGQ) is disordered. Gly residues predominate over residues 23–35 (TSSGYGKTAGRGQ).

This sequence belongs to the universal ribosomal protein uL15 family. As to quaternary structure, part of the 50S ribosomal subunit.

Binds to the 23S rRNA. In Lactobacillus gasseri (strain ATCC 33323 / DSM 20243 / BCRC 14619 / CIP 102991 / JCM 1131 / KCTC 3163 / NCIMB 11718 / NCTC 13722 / AM63), this protein is Large ribosomal subunit protein uL15.